A 339-amino-acid chain; its full sequence is uncharacterized protein (339 aa).

His17, His19, His197, and Asp278 together coordinate Zn(2+). Substrate is bound at residue Asp279.

Belongs to the metallo-dependent hydrolases superfamily. Adenosine and AMP deaminases family. Adenine deaminase type 2 subfamily. It depends on Zn(2+) as a cofactor.

It is found in the cytoplasm. The protein resides in the nucleus. This is an uncharacterized protein from Schizosaccharomyces pombe (strain 972 / ATCC 24843) (Fission yeast).